A 307-amino-acid chain; its full sequence is Elongation factor Ts (307 aa).

The tract at residues Thr-79–Val-82 is involved in Mg(2+) ion dislocation from EF-Tu.

The protein belongs to the EF-Ts family.

The protein resides in the cytoplasm. Functionally, associates with the EF-Tu.GDP complex and induces the exchange of GDP to GTP. It remains bound to the aminoacyl-tRNA.EF-Tu.GTP complex up to the GTP hydrolysis stage on the ribosome. This is Elongation factor Ts from Bartonella bacilliformis (strain ATCC 35685 / KC583 / Herrer 020/F12,63).